The following is a 500-amino-acid chain: Aspartyl/glutamyl-tRNA(Asn/Gln) amidotransferase subunit B (500 aa).

Belongs to the GatB/GatE family. GatB subfamily. As to quaternary structure, heterotrimer of A, B and C subunits.

It catalyses the reaction L-glutamyl-tRNA(Gln) + L-glutamine + ATP + H2O = L-glutaminyl-tRNA(Gln) + L-glutamate + ADP + phosphate + H(+). The enzyme catalyses L-aspartyl-tRNA(Asn) + L-glutamine + ATP + H2O = L-asparaginyl-tRNA(Asn) + L-glutamate + ADP + phosphate + 2 H(+). Functionally, allows the formation of correctly charged Asn-tRNA(Asn) or Gln-tRNA(Gln) through the transamidation of misacylated Asp-tRNA(Asn) or Glu-tRNA(Gln) in organisms which lack either or both of asparaginyl-tRNA or glutaminyl-tRNA synthetases. The reaction takes place in the presence of glutamine and ATP through an activated phospho-Asp-tRNA(Asn) or phospho-Glu-tRNA(Gln). The protein is Aspartyl/glutamyl-tRNA(Asn/Gln) amidotransferase subunit B of Rhizobium johnstonii (strain DSM 114642 / LMG 32736 / 3841) (Rhizobium leguminosarum bv. viciae).